A 452-amino-acid chain; its full sequence is MSLMQFSGLLVVWLLSTLFIATLTWFEFRRVRFNFNVFFSLLFLLTFFFGFPLTSVLVFRFDVGVAPPEILLQALLSAACFYGVYYVTYKTRLRKRVVDVPRKPLFTMNRVETHLTWVILMGIALVSVAIFFMHNGFLLFRLHSYSQIFSSEVSGVALKRFFYFFIPAMLVVYFLRQDSKAWLFFLVSTVAFGLLTYMIVGGTRANIIIAFAIFLFIGIIRGWISLWMLAAAGVLGIVGMFWLALKRYGLNVSGDEAFYTFLYLTRDTFSPWENLALLLQNYHNIDFQGLAPIVRDFYVFIPTWLWPGRPSIVLNSANYFTWEVLNNHSGLAISPTLIGSLVVMGGALFIPLGAIVVGLIIKWFDWLYELGNREPNRYKAAILHSFCFGAIFNMIVLAREGLDSFVSRVVFFLVVFGASLLVAKLLFWLFDSAGLIHKRTTSLPQAQVEGKL.

A run of 11 helical transmembrane segments spans residues phenylalanine 6 to phenylalanine 26, valine 37 to leucine 57, valine 63 to glycine 83, valine 118 to leucine 138, glycine 155 to leucine 175, alanine 181 to glycine 201, isoleucine 207 to tryptophan 227, methionine 228 to tyrosine 248, leucine 341 to isoleucine 361, tyrosine 378 to alanine 398, and valine 410 to phenylalanine 430.

This sequence belongs to the WzyE family. Probably part of a complex composed of WzxE, WzyE and WzzE.

It is found in the cell inner membrane. The protein operates within bacterial outer membrane biogenesis; enterobacterial common antigen biosynthesis. Functionally, probably involved in the polymerization of enterobacterial common antigen (ECA) trisaccharide repeat units. The chain is Probable ECA polymerase from Salmonella heidelberg (strain SL476).